A 217-amino-acid chain; its full sequence is ATP-dependent Clp protease proteolytic subunit (217 aa).

The Nucleophile role is filled by S121. H146 is an active-site residue.

The protein belongs to the peptidase S14 family. In terms of assembly, fourteen ClpP subunits assemble into 2 heptameric rings which stack back to back to give a disk-like structure with a central cavity, resembling the structure of eukaryotic proteasomes.

It is found in the cytoplasm. The catalysed reaction is Hydrolysis of proteins to small peptides in the presence of ATP and magnesium. alpha-casein is the usual test substrate. In the absence of ATP, only oligopeptides shorter than five residues are hydrolyzed (such as succinyl-Leu-Tyr-|-NHMec, and Leu-Tyr-Leu-|-Tyr-Trp, in which cleavage of the -Tyr-|-Leu- and -Tyr-|-Trp bonds also occurs).. In terms of biological role, cleaves peptides in various proteins in a process that requires ATP hydrolysis. Has a chymotrypsin-like activity. Plays a major role in the degradation of misfolded proteins. The sequence is that of ATP-dependent Clp protease proteolytic subunit from Burkholderia vietnamiensis (strain G4 / LMG 22486) (Burkholderia cepacia (strain R1808)).